Reading from the N-terminus, the 297-residue chain is Transmembrane protein 169 (297 aa).

The tract at residues 1-84 is disordered; the sequence is MEEPALVEGQ…PKEEEGDDFI (84 aa). At 1-159 the chain is on the extracellular side; sequence MEEPALVEGQ…CQLGADRGPH (159 aa). The span at 9–18 shows a compositional bias: polar residues; the sequence is GQSQLPSPHH. Residues 60–84 are compositionally biased toward acidic residues; that stretch reads ETLDEEPGESEGGDQPKEEEGDDFI. Residues 160–180 form a helical membrane-spanning segment; the sequence is VVLWTLVCLPVVFLLSFVVSF. The Cytoplasmic portion of the chain corresponds to 181–210; the sequence is YYGTITWYNIFLVYNEERTFWHKISCCPCL. The helical transmembrane segment at 211 to 231 threads the bilayer; it reads ILCYPVLIMAMASSLGLYAAV. Residues 232–297 are Extracellular-facing; that stretch reads VQLSWSWEAW…ATQEIETSAV (66 aa).

Its subcellular location is the membrane. This Bos taurus (Bovine) protein is Transmembrane protein 169 (TMEM169).